A 551-amino-acid polypeptide reads, in one-letter code: Formate--tetrahydrofolate ligase (551 aa).

Residue 65 to 72 coordinates ATP; that stretch reads TPAGEGKT.

Belongs to the formate--tetrahydrofolate ligase family.

The catalysed reaction is (6S)-5,6,7,8-tetrahydrofolate + formate + ATP = (6R)-10-formyltetrahydrofolate + ADP + phosphate. It functions in the pathway one-carbon metabolism; tetrahydrofolate interconversion. The polypeptide is Formate--tetrahydrofolate ligase (Thermosipho melanesiensis (strain DSM 12029 / CIP 104789 / BI429)).